A 445-amino-acid polypeptide reads, in one-letter code: Phenylacetate-coenzyme A ligase (445 aa).

Belongs to the phenylacetyl-CoA ligase family. As to quaternary structure, monomer.

It carries out the reaction 2-phenylacetate + ATP + CoA = phenylacetyl-CoA + AMP + diphosphate. It functions in the pathway aromatic compound metabolism; phenylacetate degradation. Functionally, catalyzes the activation of phenylacetic acid (PA) to phenylacetyl-CoA (PA-CoA). Involved in the phenylalanine metabolism. The sequence is that of Phenylacetate-coenzyme A ligase from Thermus thermophilus (strain ATCC BAA-163 / DSM 7039 / HB27).